The following is a 243-amino-acid chain: UPF0502 protein H16_B1091 (243 aa).

A disordered region spans residues 1–23; the sequence is MQSNHDSDASQAGDRPARPALRP.

Belongs to the UPF0502 family.

This is UPF0502 protein H16_B1091 from Cupriavidus necator (strain ATCC 17699 / DSM 428 / KCTC 22496 / NCIMB 10442 / H16 / Stanier 337) (Ralstonia eutropha).